We begin with the raw amino-acid sequence, 261 residues long: HLA class II histocompatibility antigen, DQ beta 1 chain (261 aa).

An N-terminal signal peptide occupies residues 1-32; it reads MSWKKALRIPGGLRAATVTLMLAMLSTPVAEG. The tract at residues 33-126 is beta-1; the sequence is RDSPEDFVYQ…LELRTTLQRR (94 aa). The Extracellular portion of the chain corresponds to 33-230; sequence RDSPEDFVYQ…RAQSESAQSK (198 aa). Disulfide bonds link C47–C111 and C149–C205. N51 carries N-linked (GlcNAc...) asparagine glycosylation. The tract at residues 127-220 is beta-2; that stretch reads VEPTVTISPS…SLQNPITVEW (94 aa). One can recognise an Ig-like C1-type domain in the interval 129–217; sequence PTVTISPSRT…EHPSLQNPIT (89 aa). Positions 221–230 are connecting peptide; it reads RAQSESAQSK. The chain crosses the membrane as a helical span at residues 231-251; that stretch reads MLSGIGGFVLGLIFLGLGLII. Over 252–261 the chain is Cytoplasmic; that stretch reads HHRSQKGLLH.

Belongs to the MHC class II family. In terms of assembly, heterodimer of an alpha and a beta subunit; also referred as MHC class II molecule. In the endoplasmic reticulum (ER) it forms a heterononamer; 3 MHC class II molecules bind to a CD74 homotrimer (also known as invariant chain or HLA class II histocompatibility antigen gamma chain). In the endosomal/lysosomal system; CD74 undergoes sequential degradation by various proteases; leaving a small fragment termed CLIP on each MHC class II molecule. MHC class II molecule interacts with HLA_DM, and HLA_DO in B-cells, in order to release CLIP and facilitate the binding of antigenic peptides.

Its subcellular location is the cell membrane. It is found in the endoplasmic reticulum membrane. The protein localises to the golgi apparatus. The protein resides in the trans-Golgi network membrane. It localises to the endosome membrane. Its subcellular location is the lysosome membrane. Binds peptides derived from antigens that access the endocytic route of antigen presenting cells (APC) and presents them on the cell surface for recognition by the CD4 T-cells. The peptide binding cleft accommodates peptides of 10-30 residues. The peptides presented by MHC class II molecules are generated mostly by degradation of proteins that access the endocytic route, where they are processed by lysosomal proteases and other hydrolases. Exogenous antigens that have been endocytosed by the APC are thus readily available for presentation via MHC II molecules, and for this reason this antigen presentation pathway is usually referred to as exogenous. As membrane proteins on their way to degradation in lysosomes as part of their normal turn-over are also contained in the endosomal/lysosomal compartments, exogenous antigens must compete with those derived from endogenous components. Autophagy is also a source of endogenous peptides, autophagosomes constitutively fuse with MHC class II loading compartments. In addition to APCs, other cells of the gastrointestinal tract, such as epithelial cells, express MHC class II molecules and CD74 and act as APCs, which is an unusual trait of the GI tract. To produce a MHC class II molecule that presents an antigen, three MHC class II molecules (heterodimers of an alpha and a beta chain) associate with a CD74 trimer in the ER to form a heterononamer. Soon after the entry of this complex into the endosomal/lysosomal system where antigen processing occurs, CD74 undergoes a sequential degradation by various proteases, including CTSS and CTSL, leaving a small fragment termed CLIP (class-II-associated invariant chain peptide). The removal of CLIP is facilitated by HLA-DM via direct binding to the alpha-beta-CLIP complex so that CLIP is released. HLA-DM stabilizes MHC class II molecules until primary high affinity antigenic peptides are bound. The MHC II molecule bound to a peptide is then transported to the cell membrane surface. In B-cells, the interaction between HLA-DM and MHC class II molecules is regulated by HLA-DO. Primary dendritic cells (DCs) also to express HLA-DO. Lysosomal microenvironment has been implicated in the regulation of antigen loading into MHC II molecules, increased acidification produces increased proteolysis and efficient peptide loading. The sequence is that of HLA class II histocompatibility antigen, DQ beta 1 chain (HLA-DQB1) from Homo sapiens (Human).